A 149-amino-acid chain; its full sequence is UPF0251 protein Moth_1655 (149 aa).

Residues 129–149 (AGRGPGRGRCHRHGRFGEGEH) are disordered.

The protein belongs to the UPF0251 family.

The chain is UPF0251 protein Moth_1655 from Moorella thermoacetica (strain ATCC 39073 / JCM 9320).